Reading from the N-terminus, the 100-residue chain is NADH-quinone oxidoreductase subunit K (100 aa).

3 helical membrane passes run 4-24, 29-49, and 60-80; these read LNYG…SLLI, IFIL…FILI, and VLYI…LAIF.

It belongs to the complex I subunit 4L family. As to quaternary structure, NDH-1 is composed of 13 different subunits. Subunits NuoA, H, J, K, L, M, N constitute the membrane sector of the complex.

It is found in the cell membrane. The catalysed reaction is a quinone + NADH + 5 H(+)(in) = a quinol + NAD(+) + 4 H(+)(out). NDH-1 shuttles electrons from NADH, via FMN and iron-sulfur (Fe-S) centers, to quinones in the respiratory chain. The immediate electron acceptor for the enzyme in this species is believed to be ubiquinone. Couples the redox reaction to proton translocation (for every two electrons transferred, four hydrogen ions are translocated across the cytoplasmic membrane), and thus conserves the redox energy in a proton gradient. This chain is NADH-quinone oxidoreductase subunit K, found in Buchnera aphidicola subsp. Cinara cedri (strain Cc).